Here is a 378-residue protein sequence, read N- to C-terminus: Small ribosomal subunit protein bS1 (378 aa).

5 consecutive S1 motif domains span residues 1–66 (ETVT…VSRR), 87–155 (GMEV…LGLK), 172–242 (GTKL…LGLK), 259–329 (GDRV…LGVK), and 346–378 (GAIV…ASEA).

This sequence belongs to the bacterial ribosomal protein bS1 family.

Binds mRNA; thus facilitating recognition of the initiation point. It is needed to translate mRNA with a short Shine-Dalgarno (SD) purine-rich sequence. This is Small ribosomal subunit protein bS1 (rpsA) from Providencia sp.